We begin with the raw amino-acid sequence, 500 residues long: Glycogen synthase (500 aa).

Lys15 contacts ADP-alpha-D-glucose.

The protein belongs to the glycosyltransferase 1 family. Bacterial/plant glycogen synthase subfamily.

It carries out the reaction [(1-&gt;4)-alpha-D-glucosyl](n) + ADP-alpha-D-glucose = [(1-&gt;4)-alpha-D-glucosyl](n+1) + ADP + H(+). It participates in glycan biosynthesis; glycogen biosynthesis. Synthesizes alpha-1,4-glucan chains using ADP-glucose. This is Glycogen synthase from Protochlamydia amoebophila (strain UWE25).